A 61-amino-acid chain; its full sequence is Photosystem II reaction center protein K (61 aa).

Positions 1 to 24 (MLNIFCLICICLNSTLYSSSFFFA) are excised as a propeptide. The helical transmembrane segment at 32–52 (FFNPIIDVMPIIPVLFFLLAF) threads the bilayer.

Belongs to the PsbK family. PSII is composed of 1 copy each of membrane proteins PsbA, PsbB, PsbC, PsbD, PsbE, PsbF, PsbH, PsbI, PsbJ, PsbK, PsbL, PsbM, PsbT, PsbX, PsbY, PsbZ, Psb30/Ycf12, at least 3 peripheral proteins of the oxygen-evolving complex and a large number of cofactors. It forms dimeric complexes.

The protein resides in the plastid. It localises to the chloroplast thylakoid membrane. One of the components of the core complex of photosystem II (PSII). PSII is a light-driven water:plastoquinone oxidoreductase that uses light energy to abstract electrons from H(2)O, generating O(2) and a proton gradient subsequently used for ATP formation. It consists of a core antenna complex that captures photons, and an electron transfer chain that converts photonic excitation into a charge separation. This is Photosystem II reaction center protein K from Phalaenopsis aphrodite subsp. formosana (Moth orchid).